The primary structure comprises 1050 residues: Calmodulin-binding transcription activator 2 (1050 aa).

The segment at residues 15–141 is a DNA-binding region (CG-1); sequence IKQLLSEAQH…YLEVKGNRMS (127 aa). Polar residues-rich tracts occupy residues 141 to 171 and 183 to 196; these read STSG…SSIL and SRQA…NPEP. 2 disordered regions span residues 141–196 and 223–246; these read STSG…NPEP and NRDG…SGDV. ANK repeat units follow at residues 661–690 and 694–723; these read DGQG…SINF and NGWS…DAGA. IQ domains are found at residues 870 to 899 and 893 to 922; these read VHAA…RIVK and IRQR…SVGL. The interval 918-940 is calmodulin-binding; that stretch reads WSVGLLEKIILRWRRKGSGLRGF. A coiled-coil region spans residues 957 to 985; it reads QEDDYDFLKEGRKQTEERLQKALTRVKSM. Serine 984 carries the post-translational modification Phosphoserine.

The protein belongs to the CAMTA family. Expressed in roots, stems, old leaves, petals, sepals, top of carpels, stigmas, stamen filaments, anthers and siliques, but not in pollen.

The protein resides in the nucleus. Transcription activator that binds to the DNA consensus sequence 5'-[ACG]CGCG[GTC]-3'. Regulates transcriptional activity in response to calcium signals. Binds calmodulin in a calcium-dependent manner. Involved in freezing tolerance in association with CAMTA1 and CAMTA3. Contributes together with CAMTA1 and CAMTA3 to the positive regulation of the cold-induced expression of DREB1A/CBF3, DREB1B/CBF1 and DREB1C/CBF2. Involved together with CAMTA3 and CAMTA4 in the positive regulation of a general stress response. Involved in tolerance to aluminum. Binds to the promoter of ALMT1 transporter and contributes to the positive regulation of aluminum-induced expression of ALMT1. The chain is Calmodulin-binding transcription activator 2 from Arabidopsis thaliana (Mouse-ear cress).